Consider the following 440-residue polypeptide: Transposon Ty1-GR1 Gag polyprotein (440 aa).

Over residues 1-16 the composition is skewed to low complexity; sequence MESQQLSQHSHISHGS. Disordered stretches follow at residues 1–93, 126–173, and 352–440; these read MESQ…MMTQ, PQSQ…RPPP, and GSRN…PGTY. Composition is skewed to polar residues over residues 48–60, 71–93, and 127–152; these read TKAN…TPAS, SPQT…MMTQ, and QSQF…GNTF. Residues 153–165 show a composition bias toward low complexity; it reads TDSSSADSDMTST. Positions 299–401 are RNA-binding; the sequence is NNGIHINNKV…NSKSKTARAH (103 aa). The segment covering 402–418 has biased composition (low complexity); that stretch reads NVSTSNNSPSTDNDSIS. Serine 416 is modified (phosphoserine). The span at 419 to 428 shows a compositional bias: polar residues; the sequence is KSTTEPIQLN. The segment covering 429–440 has biased composition (basic and acidic residues); sequence NKHDLHLRPGTY.

In terms of assembly, homotrimer.

Its subcellular location is the cytoplasm. Its function is as follows. Capsid protein (CA) is the structural component of the virus-like particle (VLP), forming the shell that encapsulates the retrotransposons dimeric RNA genome. The particles are assembled from trimer-clustered units and there are holes in the capsid shells that allow for the diffusion of macromolecules. CA also has nucleocapsid-like chaperone activity, promoting primer tRNA(i)-Met annealing to the multipartite primer-binding site (PBS), dimerization of Ty1 RNA and initiation of reverse transcription. The protein is Transposon Ty1-GR1 Gag polyprotein (TY1A-GR1) of Saccharomyces cerevisiae (strain ATCC 204508 / S288c) (Baker's yeast).